The primary structure comprises 193 residues: Imidazoleglycerol-phosphate dehydratase (193 aa).

It belongs to the imidazoleglycerol-phosphate dehydratase family.

The protein localises to the cytoplasm. The enzyme catalyses D-erythro-1-(imidazol-4-yl)glycerol 3-phosphate = 3-(imidazol-4-yl)-2-oxopropyl phosphate + H2O. It functions in the pathway amino-acid biosynthesis; L-histidine biosynthesis; L-histidine from 5-phospho-alpha-D-ribose 1-diphosphate: step 6/9. The polypeptide is Imidazoleglycerol-phosphate dehydratase (hisB) (Saccharolobus solfataricus (strain ATCC 35092 / DSM 1617 / JCM 11322 / P2) (Sulfolobus solfataricus)).